The primary structure comprises 690 residues: Dual specificity protein kinase lkh1 (690 aa).

The disordered stretch occupies residues 39–70; it reads PNLPPPFSVHQLQSFVPPQPPSSSSPSTTGTV. Residues 362-682 enclose the Protein kinase domain; the sequence is YTVVRLLGHG…AKEALWHPFF (321 aa). Residues 368-376 and Lys391 each bind ATP; that span reads LGHGTFGKV. Asp488 serves as the catalytic Proton acceptor.

This sequence belongs to the protein kinase superfamily. CMGC Ser/Thr protein kinase family. Lammer subfamily. In terms of processing, autophosphorylates on all three types of residues.

The catalysed reaction is L-seryl-[protein] + ATP = O-phospho-L-seryl-[protein] + ADP + H(+). It catalyses the reaction L-threonyl-[protein] + ATP = O-phospho-L-threonyl-[protein] + ADP + H(+). The enzyme catalyses L-tyrosyl-[protein] + ATP = O-phospho-L-tyrosyl-[protein] + ADP + H(+). In terms of biological role, protein kinase that may act as a negative regulator of filamentous growth and flocculation. Appears to have a role in normal cell wall and septum formation and in cell separation. May have antagonistic function in the regulation of beta-glucan distribution between the sites for cell wall and septum assembly. The sequence is that of Dual specificity protein kinase lkh1 (lkh1) from Schizosaccharomyces pombe (strain 972 / ATCC 24843) (Fission yeast).